The chain runs to 184 residues: NADH-quinone oxidoreductase subunit B (184 aa).

Residues C63, C64, C128, and C158 each contribute to the [4Fe-4S] cluster site.

The protein belongs to the complex I 20 kDa subunit family. NDH-1 is composed of 14 different subunits. Subunits NuoB, C, D, E, F, and G constitute the peripheral sector of the complex. The cofactor is [4Fe-4S] cluster.

The protein resides in the cell inner membrane. It carries out the reaction a quinone + NADH + 5 H(+)(in) = a quinol + NAD(+) + 4 H(+)(out). Functionally, NDH-1 shuttles electrons from NADH, via FMN and iron-sulfur (Fe-S) centers, to quinones in the respiratory chain. The immediate electron acceptor for the enzyme in this species is believed to be ubiquinone. Couples the redox reaction to proton translocation (for every two electrons transferred, four hydrogen ions are translocated across the cytoplasmic membrane), and thus conserves the redox energy in a proton gradient. The sequence is that of NADH-quinone oxidoreductase subunit B from Xylella fastidiosa (strain M12).